The primary structure comprises 1752 residues: Serine protease/ABC transporter B family protein tagA (1752 aa).

The first 24 residues, 1 to 24, serve as a signal peptide directing secretion; sequence MNKKLFIFGLSLFLFLFIFNLSLS. Asparagine 20 is a glycosylation site (N-linked (GlcNAc...) asparagine). The Peptidase S8 domain occupies 280–696; sequence HYSIQSGSAS…FGNIQLSKLI (417 aa). Catalysis depends on charge relay system residues aspartate 312 and histidine 352. 2 N-linked (GlcNAc...) asparagine glycosylation sites follow: asparagine 400 and asparagine 557. Serine 625 functions as the Charge relay system in the catalytic mechanism. 3 N-linked (GlcNAc...) asparagine glycosylation sites follow: asparagine 653, asparagine 785, and asparagine 823. The chain crosses the membrane as a helical span at residues 909–929; it reads IVLLGIFGIIIVGAVIFVLVC. Positions 946–1032 are disordered; the sequence is DKGGDGNSIR…QNNSPQYDED (87 aa). Positions 962-994 are enriched in low complexity; it reads NNNNNNNNNNNNNNNNNNNNNNNNNNNNNNNNN. A glycan (N-linked (GlcNAc...) asparagine) is linked at asparagine 993. Residues 995-1004 show a composition bias toward polar residues; that stretch reads SNGKQSNIEL. The span at 1013–1028 shows a compositional bias: low complexity; the sequence is GTPNGDDQQQQNNSPQ. Transmembrane regions (helical) follow at residues 1058-1078, 1102-1122, 1174-1194, 1200-1220, 1285-1305, and 1315-1335; these read ILGLALFLSFIDVALGLAVPL, FALIIIGMIIVQFLSGILLAL, IPHMIIQIATIGGTLIMLFII, LVVLCPLPILLVFSKFYGGYI, TSGIFEQLSVFILLWYGSSLV, and LIAFNLFLPFITGAVTQVASL. The region spanning 1059–1341 is the ABC transmembrane type-1 domain; the sequence is LGLALFLSFI…VASLYTTYKS (283 aa). The ABC transporter domain occupies 1374-1610; it reads IQFNKVSFAY…KGMFYDFVQI (237 aa). ATP is bound at residue 1409-1416; it reads GPSGGGKS. The segment at 1621-1686 is disordered; that stretch reads IQLPSNSRNT…SRSPPPMWRQ (66 aa). A compositionally biased stretch (basic and acidic residues) spans 1631–1642; that stretch reads RNADKLRNRSET. N-linked (GlcNAc...) asparagine glycans are attached at residues asparagine 1638, asparagine 1670, and asparagine 1694.

It in the C-terminal section; belongs to the ABC transporter superfamily. ABCB family. Multidrug resistance exporter (TC 3.A.1.201) subfamily. The protein in the N-terminal section; belongs to the peptidase S8 family.

The protein localises to the membrane. In terms of biological role, required for a general cell fate determination at the onset of development. Required for the specification of an initial population of prespore cells in which tagA is expressed. Required for normal SDF-2 signaling during spore encapsulation. The sequence is that of Serine protease/ABC transporter B family protein tagA (tagA) from Dictyostelium discoideum (Social amoeba).